The chain runs to 635 residues: Nuclear distribution protein nudE homolog 1 (635 aa).

Positions 14-192 (EKEIKHWKSK…TILRDLVTRS (179 aa)) form a coiled coil. Disordered stretches follow at residues 35-63 (ESSL…NKTI), 200-267 (TMAS…LSRD), 279-328 (VLDD…SARA), 389-504 (SRVV…DHDP), and 516-635 (AAQA…TETF). Residues 43-56 (ESSKELEQEMEKEL) are compositionally biased toward basic and acidic residues. Polar residues-rich tracts occupy residues 201-224 (MASS…SPIK) and 237-246 (SRQALSSPVT). Residues 280–299 (LDDSPTATTTSAAPTRSSTL) are compositionally biased toward low complexity. Polar residues-rich tracts occupy residues 314–326 (ASTS…SPSA) and 411–428 (GSPS…TSTP). The span at 516-541 (AAQASVAKRRTSMSGSGMSHSASHGS) shows a compositional bias: low complexity. Composition is skewed to polar residues over residues 547–571 (SGST…SSMT) and 580–619 (SKRT…PAQT). Over residues 620 to 635 (LSRSRSSSLGSETETF) the composition is skewed to low complexity.

This sequence belongs to the nudE family. Self-associates. Interacts with PAC1.

The protein resides in the cytoplasm. It is found in the cytoskeleton. Functionally, required for nuclear migration. This is Nuclear distribution protein nudE homolog 1 (NDE1) from Mycosarcoma maydis (Corn smut fungus).